Reading from the N-terminus, the 967-residue chain is Transmembrane channel-like protein 5 (967 aa).

4 stretches are compositionally biased toward polar residues: residues 1–10 (MSSFHQNSSY), 21–31 (GSRNHTHNYLE), 53–62 (NPHSSGSRTN), and 168–184 (QDNS…SNLP). The disordered stretch occupies residues 1-240 (MSSFHQNSSY…EEGDGYSSSK (240 aa)). Residues 1 to 420 (MSSFHQNSSY…YFSFLRWLLK (420 aa)) lie on the Extracellular side of the membrane. A helical transmembrane segment spans residues 421 to 441 (FNIFSFVMNFSFIIIPQFTVG). Residues 442–449 (AKNTLQFT) lie on the Cytoplasmic side of the membrane. The chain crosses the membrane as a helical span at residues 450-470 (GLEFFTGAGYFGDTVMYYGFY). Residues 471-487 (TNSTIRHRMGGASYNMQ) lie on the Extracellular side of the membrane. Residues 488-508 (LAYIFTIGACLVVCFFSLLFS) traverse the membrane as a helical segment. Residues 509-581 (MAKYFRNNFI…NQQLTRFSAH (73 aa)) lie on the Cytoplasmic side of the membrane. A helical transmembrane segment spans residues 582–602 (VAAWLVSTGVTAACCVAVYYL). Residues 603 to 616 (AEYNSEFLKTHRNP) are Extracellular-facing. A helical membrane pass occupies residues 617 to 637 (GAVLLLPFVVSCINLAVPRFY). Over 638 to 660 (SMFRLVERYEIPRQEVYVLLVRN) the chain is Cytoplasmic. The helical transmembrane segment at 661–681 (IFLKISIVGILCYYWLNIVAL) threads the bilayer. Over 682–694 (SGEECWETLIGQD) the chain is Extracellular. A helical transmembrane segment spans residues 695 to 715 (IYRLLLMDFVFSLADSLLGEF). Over 716–749 (LRRLIGMKFTSLSLQEFDIARNVLELIYAQTLTW) the chain is Cytoplasmic. The helical transmembrane segment at 750-770 (LGIFFCPLLPFIQMITLFIMF) threads the bilayer. Topologically, residues 771 to 796 (YVKNVSLMMNFQPPSKAWRASQMITF) are extracellular. Residues 797–817 (FIFLLFFPSFTGVLCTLAITI) form a helical membrane-spanning segment. The Cytoplasmic portion of the chain corresponds to 818–861 (WRLKPSADCGPFRGLPSFIQSIYSWIDTLSRRPGYLWVVWIYQN). Residues 862–882 (LIGSVHFFFILTLIVLIITYL) form a helical membrane-spanning segment. The Extracellular portion of the chain corresponds to 883-967 (YWQITEGRKV…RSAQEENPIA (85 aa)).

It belongs to the TMC family. Ubiquitously expressed.

Its subcellular location is the membrane. Its function is as follows. Probable component of an ion channel. Molecular function hasn't been characterized yet. The protein is Transmembrane channel-like protein 5 of Mus musculus (Mouse).